The following is an 89-amino-acid chain: Small ribosomal subunit protein uS15 (89 aa).

Belongs to the universal ribosomal protein uS15 family. In terms of assembly, part of the 30S ribosomal subunit. Forms a bridge to the 50S subunit in the 70S ribosome, contacting the 23S rRNA.

One of the primary rRNA binding proteins, it binds directly to 16S rRNA where it helps nucleate assembly of the platform of the 30S subunit by binding and bridging several RNA helices of the 16S rRNA. In terms of biological role, forms an intersubunit bridge (bridge B4) with the 23S rRNA of the 50S subunit in the ribosome. This chain is Small ribosomal subunit protein uS15, found in Leifsonia xyli subsp. xyli (strain CTCB07).